The sequence spans 178 residues: Alkyl hydroperoxide reductase AhpD (178 aa).

The active-site Proton donor is the Cys-130. Cys-130 and Cys-133 are disulfide-bonded. Cys-133 (cysteine sulfenic acid (-SOH) intermediate) is an active-site residue.

The protein belongs to the AhpD family. As to quaternary structure, homotrimer.

The catalysed reaction is N(6)-[(R)-dihydrolipoyl]-L-lysyl-[lipoyl-carrier protein] + a hydroperoxide = N(6)-[(R)-lipoyl]-L-lysyl-[lipoyl-carrier protein] + an alcohol + H2O. Antioxidant protein with alkyl hydroperoxidase activity. Required for the reduction of the AhpC active site cysteine residues and for the regeneration of the AhpC enzyme activity. This chain is Alkyl hydroperoxide reductase AhpD, found in Mycolicibacterium paratuberculosis (strain ATCC BAA-968 / K-10) (Mycobacterium paratuberculosis).